The primary structure comprises 402 residues: Protochlorophyllide reductase B, chloroplastic (402 aa).

It belongs to the short-chain dehydrogenases/reductases (SDR) family. POR subfamily.

The protein resides in the plastid. It is found in the chloroplast. The enzyme catalyses chlorophyllide a + NADP(+) = protochlorophyllide a + NADPH + H(+). It functions in the pathway porphyrin-containing compound metabolism; chlorophyll biosynthesis. Functionally, phototransformation of protochlorophyllide (Pchlide) to chlorophyllide (Chlide). In Oryza sativa subsp. japonica (Rice), this protein is Protochlorophyllide reductase B, chloroplastic (PORB).